Reading from the N-terminus, the 246-residue chain is uncharacterized protein (246 aa).

Residues 1–30 (MKKKQVSHAIIISVMLSFVIAVFHTIHASE) form the signal peptide.

This is an uncharacterized protein from Bacillus subtilis (strain 168).